The sequence spans 48 residues: Large ribosomal subunit protein bL32 (48 aa).

Positions 24-48 (LPMPIKDKDGSYKMPHRVNPVTKEY) are disordered.

The protein belongs to the bacterial ribosomal protein bL32 family.

This chain is Large ribosomal subunit protein bL32, found in Campylobacter lari (strain RM2100 / D67 / ATCC BAA-1060).